Here is a 964-residue protein sequence, read N- to C-terminus: MAESSAATQSPSVSSSSSGAEPSALGGGGGSPGACPALGAKSCGSSCADSFVSSSSSQPVSIFSTSQAGLSSLCSDEPPSKSMTSSFLSSSEIHNPDPTTPLGEKSETLGSQFVLAKGKDPLVLLDKKKLDSPQGTNKDRVDAPVSLATGIPCSHPSIPDSFPEQPAFLSKEIGPAEEWVVKDQEPKNPNKVPDGEDRSALDFGQSKAEHICTYSLSPSELPVASVEKDSPESPFEVIIDKATFDREFKDLYKENPNDLGGWAAHGDRESPADLLEMNDKLFPLRNKEAGRYPSSVLLGRQFSHTTAALEEVSRCVNDMHNFTNEILTWDLDPQAKQQANKTSCTTESTGLDRSELRSEIPVINLKTNPQQKMPVCSFNGSTPITKSTGDWTEAFTEGKPVRDYLSSTKEAGGNGVPGSSQLHSELPGSMPEKWVSGSGAATVEVTLPNLRGAWPNSVMGEVTEVDSSGESDDTVIEDITEKPDSLPSAAAKTSEREIKETPSRETVRSEMCENSEQPQAQPETPTQKSLEGEVASQVPNTLNEVTPEKLDMTNNPKVCSAAPPSVLNETGFSLTVPASAKLESLLGKYVEDTDGSSPEDLMAVLTGAEEKGIVDKEEGDVLEAVLEKIADFKNTLPVELLHESELSGSETKNIKSKYSEDSRETTGGAPTMSPDLEQEQLTIRAIKELGERQAEKVQDEGISSGGKLKQTFAPQSGPQSSSDILEHTDVKTGSDLGIPKNPTIIKNTRIDSISSLTKTEMVNKNVLARLLSDFPVHDLIFWRDVKKTGFVFGTTLIMLLSLAAFSVISVVSYLILALLSVTISFRVYKSVIQAVQKSEEGHPFKAYLDVDITLSSEAFHNYMNAAMVHVNKALKLIIRLFLVEDLVDSLKLAVFMWLMTYVGAVFNGITLLILAELLVFSVPIVYEKYKTQIDHYVGIARDQTKSIVEKIQAKLPGIAKKKAE.

Positions 1-24 (MAESSAATQSPSVSSSSSGAEPSA) are enriched in low complexity. Disordered stretches follow at residues 1-32 (MAESSAATQSPSVSSSSSGAEPSALGGGGGSP), 68-109 (AGLS…SETL), and 179-200 (WVVKDQEPKNPNKVPDGEDRSA). Ala2 carries the post-translational modification N-acetylalanine. Residues 2 to 795 (AESSAATQSP…KKTGFVFGTT (794 aa)) are Cytoplasmic-facing. Ser31 carries the phosphoserine modification. Positions 80–91 (SKSMTSSFLSSS) are enriched in low complexity. 7 positions are modified to phosphoserine: Ser217, Ser225, Ser230, Ser233, Ser270, Ser303, and Ser429. The tract at residues 479-536 (ITEKPDSLPSAAAKTSEREIKETPSRETVRSEMCENSEQPQAQPETPTQKSLEGEVAS) is disordered. The span at 493-511 (TSEREIKETPSRETVRSEM) shows a compositional bias: basic and acidic residues. Residues 516–527 (EQPQAQPETPTQ) show a composition bias toward low complexity. Ser529 carries the post-translational modification Phosphoserine. Thr593 carries the post-translational modification Phosphothreonine. Phosphoserine occurs at positions 596, 597, and 673. 2 disordered regions span residues 645–674 (ELSGSETKNIKSKYSEDSRETTGGAPTMSP) and 697–723 (VQDEGISSGGKLKQTFAPQSGPQSSSD). Polar residues predominate over residues 712-723 (FAPQSGPQSSSD). The region spanning 776 to 964 (VHDLIFWRDV…LPGIAKKKAE (189 aa)) is the Reticulon domain. The segment at residues 796–819 (LIMLLSLAAFSVISVVSYLILALL) is an intramembrane region (helical). The Cytoplasmic portion of the chain corresponds to 820 to 876 (SVTISFRVYKSVIQAVQKSEEGHPFKAYLDVDITLSSEAFHNYMNAAMVHVNKALKL). An intramembrane region (helical) is located at residues 877–899 (IIRLFLVEDLVDSLKLAVFMWLM). The Cytoplasmic segment spans residues 900–903 (TYVG). An intramembrane region (helical) is located at residues 904–926 (AVFNGITLLILAELLVFSVPIVY). An interaction with FADD region spans residues 919-964 (VFSVPIVYEKYKTQIDHYVGIARDQTKSIVEKIQAKLPGIAKKKAE). The Cytoplasmic portion of the chain corresponds to 927–964 (EKYKTQIDHYVGIARDQTKSIVEKIQAKLPGIAKKKAE). An interaction with BACE1 region spans residues 932 to 934 (QID).

Homodimer. Interacts with RTN4. Isoform 3 interacts with BACE1, BACE2, BCL2 and FADD. Interacts with ATL1 and ATL2. Isoform 3 interacts with TMEM33. Interacts with ZFYVE27 and with KIF5A in a ZFYVE27-dependent manner. Interacts with RIGI. Interacts with TRIM25. In terms of tissue distribution, isoform 1, isoform 3, isoform 4 and isoform 5 are expressed in spinal cord. Isoform 1 is present in brain, where it is expressed in the neurons of cerebral cortex, hippocampus, hypothalamus and cerebellum (at protein level).

It localises to the endoplasmic reticulum membrane. It is found in the golgi apparatus membrane. May be involved in membrane trafficking in the early secretory pathway. Inhibits BACE1 activity and amyloid precursor protein processing. May induce caspase-8 cascade and apoptosis. May favor BCL2 translocation to the mitochondria upon endoplasmic reticulum stress. Induces the formation of endoplasmic reticulum tubules. Also acts as an inflammation-resolving regulator by interacting with both TRIM25 and RIGI, subsequently impairing RIGI 'Lys-63'-linked polyubiquitination leading to IRF3 and NF-kappa-B inhibition. This is Reticulon-3 (Rtn3) from Mus musculus (Mouse).